A 125-amino-acid chain; its full sequence is Large ribosomal subunit protein bL12 (125 aa).

This sequence belongs to the bacterial ribosomal protein bL12 family. Homodimer. Part of the ribosomal stalk of the 50S ribosomal subunit. Forms a multimeric L10(L12)X complex, where L10 forms an elongated spine to which 2 to 4 L12 dimers bind in a sequential fashion. Binds GTP-bound translation factors.

Its function is as follows. Forms part of the ribosomal stalk which helps the ribosome interact with GTP-bound translation factors. Is thus essential for accurate translation. The protein is Large ribosomal subunit protein bL12 of Anaeromyxobacter sp. (strain Fw109-5).